The chain runs to 635 residues: Voltage-gated potassium channel KCNC4 (635 aa).

The segment at 1 to 24 (MISSVCVSSYRGRKSGNKPPSKTC) is disordered. Positions 1–28 (MISSVCVSSYRGRKSGNKPPSKTCLKEE) are inactivation gate. The Cytoplasmic segment spans residues 1–226 (MISSVCVSSY…EDPYSSRAAR (226 aa)). S8, S9, S15, and S21 each carry phosphoserine. Residues H116, C122, C143, and C144 each contribute to the Zn(2+) site. A disordered region spans residues 160–180 (IFESPDGGGSGAGPSDEAGDD). The helical transmembrane segment at 227–247 (VVAFASLFFILVSITTFCLET) threads the bilayer. N256 and N265 each carry an N-linked (GlcNAc...) asparagine glycan. Residues 278–298 (EPILTYIEGVCVLWFTLEFLV) traverse the membrane as a helical segment. At 299–312 (RIVCCPDTLDFVKN) the chain is on the cytoplasmic side. Residues 313 to 333 (LLNIIDFVAILPFYLEVGLSG) traverse the membrane as a helical segment. A helical; Voltage-sensor transmembrane segment spans residues 345–364 (FLRVVRFVRILRIFKLTRHF). Residues 365 to 380 (VGLRVLGHTLRASTNE) are Cytoplasmic-facing. A helical transmembrane segment spans residues 381–401 (FLLLIIFLALGVLIFATMIYY). K(+)-binding residues include T436, L437, G438, and Y439. Residues 436-441 (TLGYGD) carry the Selectivity filter motif. Residues 452 to 472 (VGALCALAGVLTIAMPVPVIV) form a helical membrane-spanning segment. Topologically, residues 473–635 (NNFGMYYSLA…PTAGTLFLPH (163 aa)) are cytoplasmic. A disordered region spans residues 490 to 580 (KKRKKHVPRP…RRALRRSTTR (91 aa)). A compositionally biased stretch (basic and acidic residues) spans 527–542 (AREEGMIERKRADSKQ).

It belongs to the potassium channel family. C (Shaw) (TC 1.A.1.2) subfamily. Kv3.4/KCNC4 sub-subfamily. As to quaternary structure, homotetramer. Heterotetramer of potassium channel proteins. Post-translationally, phosphorylation of serine residues in the inactivation gate inhibits rapid channel closure.

Its subcellular location is the membrane. It carries out the reaction K(+)(in) = K(+)(out). Its function is as follows. Voltage-gated potassium channel that opens in response to the voltage difference across the membrane, forming a potassium-selective channel through which potassium ions pass in accordance with their electrochemical gradient. The channel displays rapid activation and inactivation kinetics. The protein is Voltage-gated potassium channel KCNC4 of Homo sapiens (Human).